Consider the following 95-residue polypeptide: Aspartyl/glutamyl-tRNA(Asn/Gln) amidotransferase subunit C (95 aa).

It belongs to the GatC family. In terms of assembly, heterotrimer of A, B and C subunits.

It catalyses the reaction L-glutamyl-tRNA(Gln) + L-glutamine + ATP + H2O = L-glutaminyl-tRNA(Gln) + L-glutamate + ADP + phosphate + H(+). The enzyme catalyses L-aspartyl-tRNA(Asn) + L-glutamine + ATP + H2O = L-asparaginyl-tRNA(Asn) + L-glutamate + ADP + phosphate + 2 H(+). In terms of biological role, allows the formation of correctly charged Asn-tRNA(Asn) or Gln-tRNA(Gln) through the transamidation of misacylated Asp-tRNA(Asn) or Glu-tRNA(Gln) in organisms which lack either or both of asparaginyl-tRNA or glutaminyl-tRNA synthetases. The reaction takes place in the presence of glutamine and ATP through an activated phospho-Asp-tRNA(Asn) or phospho-Glu-tRNA(Gln). In Chlorobium chlorochromatii (strain CaD3), this protein is Aspartyl/glutamyl-tRNA(Asn/Gln) amidotransferase subunit C.